Reading from the N-terminus, the 356-residue chain is MARHIKVLIVDDSALVRQTLTDIFSADPELEVVGTASDPFVAVKRMETVVPDVILLDVAMPRMDGLTFLRKIMSQHPIPVVICSAVTEQGAEASFKAMEYGAVEIIQKPKVSTKQFLEESSIRICDAVKAAARAQLRKLAAKRFEVTPKLSADAMLPANAGRSVVQRTEKVVVVGASTGGTEALRVLLEAMPPDCPPIAIVQHMPEHFTAAFAGRLNSTCRIQVKEASDGDVMQRGQALIAPGNLHLLLKRSGSRYYVETKEGPLVRRHRPSVDVLFRSAARYAGNNAVAAIMTGMGDDGAAGMKELHETGAYTIAQDEATCVVYGMPHEAVKLGGVDAVLPLGALAAAIVKACNS.

Residues 6–123 (KVLIVDDSAL…KQFLEESSIR (118 aa)) enclose the Response regulatory domain. D57 is modified (4-aspartylphosphate). The region spanning 165-356 (VQRTEKVVVV…AAAIVKACNS (192 aa)) is the CheB-type methylesterase domain. Catalysis depends on residues S177, H203, and D299.

It belongs to the CheB family. Phosphorylated by CheA. Phosphorylation of the N-terminal regulatory domain activates the methylesterase activity.

It is found in the cytoplasm. The enzyme catalyses [protein]-L-glutamate 5-O-methyl ester + H2O = L-glutamyl-[protein] + methanol + H(+). The catalysed reaction is L-glutaminyl-[protein] + H2O = L-glutamyl-[protein] + NH4(+). Involved in chemotaxis. Part of a chemotaxis signal transduction system that modulates chemotaxis in response to various stimuli. Catalyzes the demethylation of specific methylglutamate residues introduced into the chemoreceptors (methyl-accepting chemotaxis proteins or MCP) by CheR. Also mediates the irreversible deamidation of specific glutamine residues to glutamic acid. The protein is Protein-glutamate methylesterase/protein-glutamine glutaminase 2 of Oleidesulfovibrio alaskensis (strain ATCC BAA-1058 / DSM 17464 / G20) (Desulfovibrio alaskensis).